The chain runs to 83 residues: Short neurotoxin OKI-01/OKI-19 (83 aa).

Residues 1–21 form the signal peptide; it reads MKTLLLTLVVVTIVCLDLGYT. 4 cysteine pairs are disulfide-bonded: cysteine 24/cysteine 45, cysteine 38/cysteine 62, cysteine 64/cysteine 75, and cysteine 76/cysteine 81.

It belongs to the three-finger toxin family. Short-chain subfamily. Type I alpha-neurotoxin sub-subfamily. As to expression, expressed by the venom gland.

Its subcellular location is the secreted. Binds to muscle nicotinic acetylcholine receptor (nAChR) and inhibit acetylcholine from binding to the receptor, thereby impairing neuromuscular transmission. The protein is Short neurotoxin OKI-01/OKI-19 of Laticauda laticaudata (Blue-ringed sea krait).